The primary structure comprises 197 residues: Transcription factor FapR (197 aa).

It belongs to the FapR family.

Functionally, transcriptional factor involved in regulation of membrane lipid biosynthesis by repressing genes involved in fatty acid and phospholipid metabolism. This chain is Transcription factor FapR, found in Bacillus cereus (strain 03BB102).